Consider the following 201-residue polypeptide: Transcriptional regulator GfcR (201 aa).

The protein belongs to the purine/pyrimidine phosphoribosyltransferase family. GfcR subfamily.

The protein is Transcriptional regulator GfcR of Methanobrevibacter smithii (strain ATCC 35061 / DSM 861 / OCM 144 / PS).